The sequence spans 759 residues: Protein AKNAD1 (759 aa).

The tract at residues 169-246 is disordered; that stretch reads TDQLNPKKDG…HTEKASSGNR (78 aa). Residues 181-192 are compositionally biased toward polar residues; sequence SNKPGSPTMTEE. The stretch at 371–482 forms a coiled coil; sequence QKISQGKQMC…EDVKDKVDES (112 aa). Residues 484–496 are compositionally biased toward polar residues; sequence YTSAPSLPVSSPV. Disordered regions lie at residues 484-543, 634-654, 678-723, and 735-759; these read YTSA…QEAP, EKAP…FCSD, CRKE…PSLA, and PDTS…MKSQ. The span at 497–509 shows a compositional bias: low complexity; the sequence is TLDDLASTSSSLS. The span at 639–654 shows a compositional bias: polar residues; the sequence is SDSTPNSDTGHSFCSD. Residues 679-688 are compositionally biased toward basic and acidic residues; sequence RKEPPKEFHY. A compositionally biased stretch (polar residues) spans 735 to 744; it reads PDTSKSSPTP.

The protein belongs to the AKNA family.

This is Protein AKNAD1 (AKNAD1) from Macaca fascicularis (Crab-eating macaque).